Here is a 596-residue protein sequence, read N- to C-terminus: Transketolase-like protein 1 (596 aa).

A substrate-binding site is contributed by His-46. Residues Ser-49 and 94–96 (GWL) each bind thiamine diphosphate. Residue Asp-126 coordinates Mg(2+). Thiamine diphosphate is bound by residues Gly-127 and Asn-156. Asn-156 and Leu-158 together coordinate Mg(2+). 2 residues coordinate thiamine diphosphate: Lys-218 and His-232. Substrate contacts are provided by His-232, Arg-292, and Ser-319. Glu-340 and Phe-366 together coordinate thiamine diphosphate. Catalysis depends on Glu-340, which acts as the Proton donor. Positions 390 and 398 each coordinate substrate. Thiamine diphosphate is bound at residue Gln-402. Residue Arg-448 coordinates substrate.

This sequence belongs to the transketolase family. In terms of assembly, homodimer. The cofactor is Mg(2+). It depends on Ca(2+) as a cofactor. Mn(2+) is required as a cofactor. Requires Co(2+) as cofactor. Thiamine diphosphate serves as cofactor. Widely expressed. Expressed in endothelial cells and in peripheral neurons (at protein level). In terms of tissue distribution, not expressed in fetal neocortex. As to expression, expressed in fetal neocortex.

The protein localises to the cytoplasm. The enzyme catalyses D-sedoheptulose 7-phosphate + D-glyceraldehyde 3-phosphate = aldehydo-D-ribose 5-phosphate + D-xylulose 5-phosphate. Functionally, catalyzes the transfer of a two-carbon ketol group from a ketose donor to an aldose acceptor, via a covalent intermediate with the cofactor thiamine pyrophosphate. During fetal neocortex development, may be essential to maintain the full number of basal radial glia (bRG). bRG are neural progenitor cells that undergo asymmetric divisions, generating a bRG (self-renewal) and a neuron, in contrast to basal intermediate progenitors (bIPs), which typically divide once to give rise to 2 neurons. bRG generate more cortical neurons over time than bIPs. The sequence is that of Transketolase-like protein 1 (TKTL1) from Homo sapiens (Human).